Consider the following 67-residue polypeptide: Large ribosomal subunit protein bL35 (67 aa).

Basic residues predominate over residues 1-16; that stretch reads MPKMKTKSSAKKRFRV. The segment at 1 to 24 is disordered; sequence MPKMKTKSSAKKRFRVRPGGTVKR.

It belongs to the bacterial ribosomal protein bL35 family.

This chain is Large ribosomal subunit protein bL35, found in Paracidovorax citrulli (strain AAC00-1) (Acidovorax citrulli).